The chain runs to 309 residues: Carboxylesterase Culp6 homolog (309 aa).

A helical transmembrane segment spans residues 5 to 25 (ITVIAVLIVLALIGVGIVQYV). The cysteines at positions 55 and 146 are disulfide-linked. Active-site residues include Ser-157, Asp-253, and His-279. Cys-249 and Cys-256 are joined by a disulfide.

This sequence belongs to the cutinase family.

It localises to the cell membrane. It catalyses the reaction a butanoate ester + H2O = an aliphatic alcohol + butanoate + H(+). With respect to regulation, inhibited by tetrahydrolipstatin (THL), a specific lipase inhibitor. Functionally, esterase that may be involved in cell wall biosynthesis and/or maintenance. Hydrolyzes pNP-butyrate (C4). This Corynebacterium glutamicum (strain ATCC 13032 / DSM 20300 / JCM 1318 / BCRC 11384 / CCUG 27702 / LMG 3730 / NBRC 12168 / NCIMB 10025 / NRRL B-2784 / 534) protein is Carboxylesterase Culp6 homolog.